The primary structure comprises 102 residues: ATP-dependent Clp protease adapter protein ClpS (102 aa).

The protein belongs to the ClpS family. In terms of assembly, binds to the N-terminal domain of the chaperone ClpA.

Its function is as follows. Involved in the modulation of the specificity of the ClpAP-mediated ATP-dependent protein degradation. The polypeptide is ATP-dependent Clp protease adapter protein ClpS (Shewanella pealeana (strain ATCC 700345 / ANG-SQ1)).